Reading from the N-terminus, the 335-residue chain is Phosphate acyltransferase (335 aa).

It belongs to the PlsX family. As to quaternary structure, homodimer. Probably interacts with PlsY.

It is found in the cytoplasm. It carries out the reaction a fatty acyl-[ACP] + phosphate = an acyl phosphate + holo-[ACP]. It participates in lipid metabolism; phospholipid metabolism. In terms of biological role, catalyzes the reversible formation of acyl-phosphate (acyl-PO(4)) from acyl-[acyl-carrier-protein] (acyl-ACP). This enzyme utilizes acyl-ACP as fatty acyl donor, but not acyl-CoA. This Streptococcus suis (strain 98HAH33) protein is Phosphate acyltransferase.